Reading from the N-terminus, the 123-residue chain is Large ribosomal subunit protein uL18 (123 aa).

The protein belongs to the universal ribosomal protein uL18 family. Part of the 50S ribosomal subunit; part of the 5S rRNA/L5/L18/L25 subcomplex. Contacts the 5S and 23S rRNAs.

In terms of biological role, this is one of the proteins that bind and probably mediate the attachment of the 5S RNA into the large ribosomal subunit, where it forms part of the central protuberance. The chain is Large ribosomal subunit protein uL18 from Chlamydia muridarum (strain MoPn / Nigg).